A 402-amino-acid polypeptide reads, in one-letter code: NADH-quinone oxidoreductase subunit D (402 aa).

This sequence belongs to the complex I 49 kDa subunit family. NDH-1 is composed of 14 different subunits. Subunits NuoB, C, D, E, F, and G constitute the peripheral sector of the complex.

It is found in the cell inner membrane. The catalysed reaction is a quinone + NADH + 5 H(+)(in) = a quinol + NAD(+) + 4 H(+)(out). In terms of biological role, NDH-1 shuttles electrons from NADH, via FMN and iron-sulfur (Fe-S) centers, to quinones in the respiratory chain. The immediate electron acceptor for the enzyme in this species is believed to be ubiquinone. Couples the redox reaction to proton translocation (for every two electrons transferred, four hydrogen ions are translocated across the cytoplasmic membrane), and thus conserves the redox energy in a proton gradient. This is NADH-quinone oxidoreductase subunit D from Rhodopseudomonas palustris (strain ATCC BAA-98 / CGA009).